The sequence spans 435 residues: Enolase (435 aa).

Residues H155 and E164 each contribute to the substrate site. E205 functions as the Proton donor in the catalytic mechanism. Positions 243, 292, and 319 each coordinate Mg(2+). Substrate is bound by residues E292, D319, K344, 371–374 (SHRS), and K395. Catalysis depends on K344, which acts as the Proton acceptor.

It belongs to the enolase family. As to quaternary structure, homooctamer. Mg(2+) serves as cofactor.

Its subcellular location is the cytoplasm. The protein localises to the secreted. It is found in the cell surface. It carries out the reaction (2R)-2-phosphoglycerate = phosphoenolpyruvate + H2O. It functions in the pathway carbohydrate degradation; glycolysis; pyruvate from D-glyceraldehyde 3-phosphate: step 4/5. Catalyzes the reversible conversion of 2-phosphoglycerate (2-PG) into phosphoenolpyruvate (PEP). It is essential for the degradation of carbohydrates via glycolysis. Functionally, 'Moonlights' as a plasminogen receptor and plasmin activator. Binds host (human) plasminogen in vitro; enhances the activity of host tissue-specific plasminogen activator (tPA). The protein is Enolase of Streptococcus pyogenes serotype M1.